Here is a 91-residue protein sequence, read N- to C-terminus: Ribonuclease P protein component 4 (91 aa).

Zn(2+) contacts are provided by Cys-55, Cys-58, Cys-78, and Cys-81.

It belongs to the eukaryotic/archaeal RNase P protein component 4 family. Consists of a catalytic RNA component and at least 4-5 protein subunits. Zn(2+) is required as a cofactor.

It is found in the cytoplasm. It catalyses the reaction Endonucleolytic cleavage of RNA, removing 5'-extranucleotides from tRNA precursor.. Part of ribonuclease P, a protein complex that generates mature tRNA molecules by cleaving their 5'-ends. The sequence is that of Ribonuclease P protein component 4 from Thermoplasma acidophilum (strain ATCC 25905 / DSM 1728 / JCM 9062 / NBRC 15155 / AMRC-C165).